The sequence spans 440 residues: Tol-Pal system protein TolB (440 aa).

A signal peptide spans 1–21 (MKIFGKWLLVTLLICSMPVKA).

Belongs to the TolB family. The Tol-Pal system is composed of five core proteins: the inner membrane proteins TolA, TolQ and TolR, the periplasmic protein TolB and the outer membrane protein Pal. They form a network linking the inner and outer membranes and the peptidoglycan layer.

It localises to the periplasm. In terms of biological role, part of the Tol-Pal system, which plays a role in outer membrane invagination during cell division and is important for maintaining outer membrane integrity. The protein is Tol-Pal system protein TolB of Shewanella halifaxensis (strain HAW-EB4).